The following is a 592-amino-acid chain: Potassium-transporting ATPase potassium-binding subunit (592 aa).

11 helical membrane-spanning segments follow: residues 7 to 27 (LQTV…GTFM), 71 to 91 (VLFN…QHLL), 136 to 156 (GLTV…IAVI), 179 to 199 (LYIL…QGVI), 287 to 307 (LEIL…GAMV), 314 to 334 (WTLL…LQGV), 411 to 431 (GLYT…LMIG), 449 to 469 (SVVT…IAMI), 473 to 493 (AVAA…YAFA), 515 to 535 (ILGA…VLAM), and 559 to 579 (FALW…FPAL).

It belongs to the KdpA family. In terms of assembly, the system is composed of three essential subunits: KdpA, KdpB and KdpC.

Its subcellular location is the cell inner membrane. In terms of biological role, part of the high-affinity ATP-driven potassium transport (or Kdp) system, which catalyzes the hydrolysis of ATP coupled with the electrogenic transport of potassium into the cytoplasm. This subunit binds the periplasmic potassium ions and delivers the ions to the membrane domain of KdpB through an intramembrane tunnel. This is Potassium-transporting ATPase potassium-binding subunit from Geobacter sulfurreducens (strain ATCC 51573 / DSM 12127 / PCA).